A 141-amino-acid polypeptide reads, in one-letter code: Nucleoside diphosphate kinase (141 aa).

K11, F59, R87, T93, R104, and N114 together coordinate ATP. Residue H117 is the Pros-phosphohistidine intermediate of the active site.

The protein belongs to the NDK family. In terms of assembly, homotetramer. The cofactor is Mg(2+).

It localises to the cytoplasm. It carries out the reaction a 2'-deoxyribonucleoside 5'-diphosphate + ATP = a 2'-deoxyribonucleoside 5'-triphosphate + ADP. The catalysed reaction is a ribonucleoside 5'-diphosphate + ATP = a ribonucleoside 5'-triphosphate + ADP. Its function is as follows. Major role in the synthesis of nucleoside triphosphates other than ATP. The ATP gamma phosphate is transferred to the NDP beta phosphate via a ping-pong mechanism, using a phosphorylated active-site intermediate. In Nitrosomonas europaea (strain ATCC 19718 / CIP 103999 / KCTC 2705 / NBRC 14298), this protein is Nucleoside diphosphate kinase.